A 252-amino-acid chain; its full sequence is 3-dehydroquinate dehydratase (252 aa).

3-dehydroquinate is bound by residues serine 21, 46–48 (EWR), and arginine 82. Histidine 143 functions as the Proton donor/acceptor in the catalytic mechanism. Catalysis depends on lysine 170, which acts as the Schiff-base intermediate with substrate. Arginine 213, serine 232, and glutamine 236 together coordinate 3-dehydroquinate.

This sequence belongs to the type-I 3-dehydroquinase family. As to quaternary structure, homodimer.

It catalyses the reaction 3-dehydroquinate = 3-dehydroshikimate + H2O. The protein operates within metabolic intermediate biosynthesis; chorismate biosynthesis; chorismate from D-erythrose 4-phosphate and phosphoenolpyruvate: step 3/7. Functionally, involved in the third step of the chorismate pathway, which leads to the biosynthesis of aromatic amino acids. Catalyzes the cis-dehydration of 3-dehydroquinate (DHQ) and introduces the first double bond of the aromatic ring to yield 3-dehydroshikimate. The protein is 3-dehydroquinate dehydratase of Escherichia coli O8 (strain IAI1).